Here is a 171-residue protein sequence, read N- to C-terminus: ATP synthase subunit b (171 aa).

Residues 2–22 traverse the membrane as a helical segment; the sequence is VLVKMALGFLILLSPLCAMEL.

This sequence belongs to the ATPase B chain family. In terms of assembly, F-type ATPases have 2 components, F(1) - the catalytic core - and F(0) - the membrane proton channel. F(1) has five subunits: alpha(3), beta(3), gamma(1), delta(1), epsilon(1). F(0) has three main subunits: a(1), b(2) and c(10-14). The alpha and beta chains form an alternating ring which encloses part of the gamma chain. F(1) is attached to F(0) by a central stalk formed by the gamma and epsilon chains, while a peripheral stalk is formed by the delta and b chains.

It is found in the cell inner membrane. In terms of biological role, f(1)F(0) ATP synthase produces ATP from ADP in the presence of a proton or sodium gradient. F-type ATPases consist of two structural domains, F(1) containing the extramembraneous catalytic core and F(0) containing the membrane proton channel, linked together by a central stalk and a peripheral stalk. During catalysis, ATP synthesis in the catalytic domain of F(1) is coupled via a rotary mechanism of the central stalk subunits to proton translocation. Component of the F(0) channel, it forms part of the peripheral stalk, linking F(1) to F(0). The chain is ATP synthase subunit b from Helicobacter acinonychis (strain Sheeba).